The following is a 204-amino-acid chain: Octanoyltransferase (204 aa).

The BPL/LPL catalytic domain occupies 27–204; that stretch reads KNTKDELWIV…LINYVSRNRH (178 aa). Substrate is bound by residues 66-73, 133-135, and 146-148; these read RGGQVTYH, ALG, and GLS. C164 (acyl-thioester intermediate) is an active-site residue.

Belongs to the LipB family.

The protein resides in the cytoplasm. The catalysed reaction is octanoyl-[ACP] + L-lysyl-[protein] = N(6)-octanoyl-L-lysyl-[protein] + holo-[ACP] + H(+). It participates in protein modification; protein lipoylation via endogenous pathway; protein N(6)-(lipoyl)lysine from octanoyl-[acyl-carrier-protein]: step 1/2. Functionally, catalyzes the transfer of endogenously produced octanoic acid from octanoyl-acyl-carrier-protein onto the lipoyl domains of lipoate-dependent enzymes. Lipoyl-ACP can also act as a substrate although octanoyl-ACP is likely to be the physiological substrate. In Vesicomyosocius okutanii subsp. Calyptogena okutanii (strain HA), this protein is Octanoyltransferase.